Reading from the N-terminus, the 530-residue chain is MSSLRPEEARKLATAASVSPLSNCQFCGVVISSIADEQKLEFTNKYKGSCTLLCSYDSQGVVLRVVSDDDRSHVLKEYMITADTDAAQMGRRSYAVSLDADNLVLRFGSEQDQQLFRKVVENVKHLRPKSVFSQRTEESSASQYFQFYGYLSQQQNMMQDYVRTSTYQRAILGNAVDFQDKIVLDVGAGSGILSFFAVQAGAAKVYAIEASNMAQYAQQLVESNNVQHKISVIPGKIEEIELPEKVDVIISEPMGYMLYNERMLETYLHARKWLKPQGKMYPTHGDLHIAPFSDESLYSEQYNKANFWYQSAFHGVDLTTLHKEGMKEYFRQPIVDTFDIRICMAKSVRHVCDFLNDKEDDLHLISIPLEFHILQTGICHGLAFWFDVEFSGSSQNVWLSTSPTAPLTHWYQVRCLLPMPIFIKQGQTLTGRVLLEANRRQSYDVTIDLHIEGTLISSSNTLDLKNPYFRYTGAPVQAPPGTSTQSPSEQYWTQVDTQGSRNSSSMLNGGLSVNGIGDGMDITHGLMHPH.

The 310-residue stretch at 141 to 450 folds into the SAM-dependent MTase PRMT-type domain; that stretch reads ASQYFQFYGY…QSYDVTIDLH (310 aa). Glutamine 154, arginine 163, glycine 187, glutamate 209, glutamate 238, and threonine 266 together coordinate S-adenosyl-L-methionine. The residue at position 501 (arginine 501) is an Asymmetric dimethylarginine; by autocatalysis.

Belongs to the class I-like SAM-binding methyltransferase superfamily. Protein arginine N-methyltransferase family. Homodimer. Post-translationally, the dimethylated protein is the major form.

It localises to the cytoplasm. It is found in the nucleus. It catalyses the reaction L-arginyl-[protein] + 2 S-adenosyl-L-methionine = N(omega),N(omega)-dimethyl-L-arginyl-[protein] + 2 S-adenosyl-L-homocysteine + 2 H(+). Methylates (mono- and asymmetric dimethylation) the guanidino nitrogens of arginyl residues in proteins. May methylate histone H3 at 'Arg-17' and activate transcription via chromatin remodeling. This chain is Histone-arginine methyltransferase CARMER (Art4), found in Drosophila sechellia (Fruit fly).